A 3253-amino-acid polypeptide reads, in one-letter code: MHQPPVRFPYRLLSYLISTIIAGQPLLPAVGAVITPQNGAGMDKAANGVPVVNIATPNGAGISHNRFTDYNVGKEGLILNNATGKLNPTQLGGLIQNNPNLKAGGEAKGIINEVTGGNRSLLQGYTEVAGKAANVMVANPYGITCDGCGFINTPRATLTTGRPVMNADGSLQALEVTEGSITINGAGLDGTRSDAVSIIARATEVNAALHAKDLTVTAGANRVTADGRVSALKGEGDVPKVAVDTGALGGMYARRIHLTSTESGVGVNLGNLYAREGDIILSSSGKLVLKNSLAGGNTTVTGTDVSLSGDNKAGGNLSVTGTTGLTLNQSRLVTDKNLVLSSSGQIVQNGGELTAGQNAMLSAQHLNQTSGAVNAAENVTLTTTGGITLKGRSVAGKTLTVSSGSLNNGGTLGAGRDATVKTGTFSNTGAVQGNGLKVTATDLTSTGSIKSGSTLDISARNATLSGDAGAKDSARVTVSGTLENRGRLVSDDVLTLSATQINNSGTLSGAKELVASADTLTTTEKSVTNSDGNLMLNSASSTLAGETSAGGTVSVKGNSLKTTTTAQTQGNSVSVDVQNAQLDGTQAARDILTLNASEKLTHSGKSSAPSLSLSAPELTSSGVLVASALNTQSQTLTNSGLLQGEASLTVNTQRLDNQQNGTLYSAADLTLDIPDIRNSGLITGDNGLTLNTASLSNPGKITADTLNVRATTLDGDGLLQGAAALALAGDTLSQGSHGRWLTAGDLSLRGKTLNTAGTTQGQNLTVQADRWANSGSVLATGNLTASATGQLTSTGDIMSQGDTTLNAATTDNRGSLLSAGTLSLDGNSLDNSGTVQGNHVTLHHRSTDNSGTVTGLSGLTLHSADGLTNSGALLSQNSLVLSAGDVTNSGRIQGQNITLDASSLTSSGAVQSALDLALTLSGDVIAATGSKITALGDARLTGKVLGNQGLISAKTLEVNGDSLSNSGEISGVNSLNVTLSGNLQQHGKMLTGGALNVNARDISNSGQLQGADNRITASSLANSGRVQGESGLTLTLLNALTNQTSGVLLSQNVSALSAPVLTNDGTIQGNGKTTLSAATQAHNSGKILSGGELTFTTPDYSGSGWLQATDLLLNVAKLAGNGTVMAANQATLTGNSLTNRGLFQAAQLNVNTQTITNSGTLLGNQGLTIKGNNLNNAGGKVFSGGDMLAEMVSLSGAGQLVALGNLTLKLTRGLTAQGVIAANKQLSVSSQGDITNGATLQGNGITLNAAGRLTNNGQLTAGNGTTALSGSGIAMNASGSLQAGGDVSLTSRGDITLDAFTGTTGSLMLTAAGAVINTALLYAGNNLSLFASTIRNHHGDMLAGDSLVMQKDVSGAANAEVINTSGNIETTRGDITIRTGHLLNQREGINETKSYIPVENVAVPDGANSVSVRVGDLGEDGWGYYVKSWSGTAGGGFDAWAVPTEKGATRKFLTGTTRVDVGATGGDARISAGNNLLIDADKLDNTGSHLLASGFVSLSGSQLNNQSFFGYTQDEYNVYRYYGKLAMIPNDGHLQYGDASADDRVTFTLSGAPEYVTRDTGQALRAVIQAGKNVTAVFSSDISNTSTTSNAGRITNTLAAPEINTPAEKNISPRMAQLAPDGTEMLTVTAPDWTDTITRLTIGSGTDLASGIVEGNYPLPSGNNGYFVPSADPDSPYLITVNPKLDGLGKVDSSLFAGLYDLLRMHPGQAPRETDPAYTDEKQFPGSSYFLDRLGLKPEKDYRFLGDAAFDTRYVSNYMLNQIGGRYINGVGSDTDQMRYLMDNAARAQKALGLKFGVALTADQVAALDQSILWYKAVTIKGQTVMVPEVYLSPKDVTLQNGSIISGQNVHLAGGNVTNSGSTLMAQNNLTIDSADSLGNLESGLINAGGALGLKAMGDINNISATITGKTVRLESLAGNVNNLTRYSHWQLDAPEDSLALKHTYTGSIASVSAMDSLDIRADKNISVTGAEISAGDRAALIAGNDLSLNAIDRVSSRRHANSESHQRSAGLTTITAGDSVMLSAGRDVSSQGAGIAAEDNITVRAGRDVNLLAEESVTGSSSYSKKKTVIDETVRQQGAEIASGGDTTITAGRDITAVASSVTATGNISVNAGRDVALTTATESDYHYLETKKKSGGFLSKKTTHTISENSATREAGALLSGNRVTVNAGDNLTVQGSDVVADRDVSLAAGNHVDVLAATSTDTSWRFKETKKSGLMGTGGIGFTIGSSKTTHDRREAGTTQSQSASTIGSTAGNVSITAGKQAHISGSDVIANRDISITGDSVVVDPGHDRRTVDEKFEQKKSGLTVALSGTVGSAINNAVTSAQETKESSDSRLKALQATKTALSGVQAGQAAAMATATGDPNATGVSLSLTTQKSKSQQHSESDTVSGSTLNAGNNLSVVATGKNRGDNRGDIVIAGSQLKAGGNTSLDAANDILLSGAANTQKTTGRNSSSGGGVGVSIGAGKGAGISVFASVNAAKGSEKGNGTEWTETTTDSGKTVTINSGRDTVLNGAQVNGNRIIADVGHDLLISSQQDTSKYDSKQTSVAAGGSFTFGSMTGSGYIAASRDKMKSRFDSVAEQTGMFAGDGGFDITVGRHTQLDGAVIASTATPDKNHLDTGTLGFSDLHNEADYKVSHSGISLSGGGSFGDKFQGNMPGGMISAGGHSGHAEGTTQAAVAEGTITIRDRDNQKQNPADLSRDPAHANDSISPIFDKEKEQRRLQTVGLISDIGSQVADIARTQGELNALKAAKEATGETLPANATEKQRQEYLAKLRDTPEYKKEQEKYGTGSEIQLGIQAATAALQGLAGGNLAGALAGASAPELAHLLKSTEKDPAVNAIAHAILGGAVAAMQGNNVAAGAAGAATGELAARAIAGMLYPGVKQSDLSEEQKQTISTLATVSAGLAGGLTGNSSASAAVGAQSGKNAVDNNYLSVSEKTELEIAKQTLKNSKNPAEREKAQQKYDALLEKDIASDKEVIAACGNGNAGSSACASARLKVIASKEGYEDGPYNSKYSQQYADAYGQIVNLLDITSVDVQNQQQVKDAMVSYFMATLGVDQKTAQGYVETTQGLEIAAASMTPLFGQAVANKITALVDKANKYPSGIGFKINQPEHLAQLDGYSQKKGISGAHNADVFNKAVVDNGVKIISETPTGVRGITQVQYEIPTKDAAGNTTGNYKGNGAKPFEKTIYDPKIFTDEKMLQLGQEAAAIGYSNAIKNGLQAYDAKAGGVTFRVYIDQKTGIVSNFHPK.

A signal peptide spans 1-32 (MHQPPVRFPYRLLSYLISTIIAGQPLLPAVGA). The tract at residues 36-322 (PQNGAGMDKA…AGGNLSVTGT (287 aa)) is two-partner system transport domain (TPS). The tract at residues 351–1384 (GELTAGQNAM…ITIRTGHLLN (1034 aa)) is FHA-1. The interval 1385-1656 (QREGINETKS…DLASGIVEGN (272 aa)) is receptor binding domain (RBD). The YP domain stretch occupies residues 1657–1841 (YPLPSGNNGY…LSPKDVTLQN (185 aa)). The interval 1842–1902 (GSIISGQNVH…GLKAMGDINN (61 aa)) is periplasmic FHA-1 repeat (pFR). The tract at residues 1944 to 2548 (TYTGSIASVS…TSKYDSKQTS (605 aa)) is FHA-2. Disordered regions lie at residues 2228–2252 (GSSKTTHDRREAGTTQSQSASTIGS), 2362–2410 (TGDP…GKNR), 2483–2503 (GSEKGNGTEWTETTTDSGKTV), and 2687–2712 (IRDRDNQKQNPADLSRDPAHANDSIS). Polar residues-rich tracts occupy residues 2240–2252 (GTTQSQSASTIGS), 2368–2403 (TGVSLSLTTQKSKSQQHSESDTVSGSTLNAGNNLSV), and 2490–2503 (TEWTETTTDSGKTV). Positions 2888 to 2930 (SDLSEEQKQTISTLATVSAGLAGGLTGNSSASAAVGAQSGKNA) are pretoxin (PT) domain. Positions 2931-2934 (VDNN) match the VDNN CT cleavage motif motif. A C-terminal effector domain (CT) region spans residues 2931–3253 (VDNNYLSVSE…TGIVSNFHPK (323 aa)).

In the N-terminal section; belongs to the CdiA toxin family. It in the C-terminal section; belongs to the bacterial EndoU family. Forms a 1:1 complex with cognate immunity protein CdiI-STECO31. Requires tRNase activity is metal-independent. as cofactor. Post-translationally, the CT domain is cleaved upon binding to receptor Tsx on target cells.

It is found in the secreted. The protein localises to the target cell. Its subcellular location is the target cell cytoplasm. In terms of biological role, toxic component of a toxin-immunity protein module, which functions as a cellular contact-dependent growth inhibition (CDI) system. CDI modules allow bacteria to communicate with and inhibit the growth of closely related neighboring target bacteria in a contact-dependent fashion (target cell counts decrease 1000- to 10000-fold with this CDI). Uses outer membrane nucleoside transporter Tsx on target cells as a receptor. Gains access to the cytoplasm of target cells by using integral inner membrane protein PTS system glucose-specific EIICB component (ptsG). Targeting of the C-terminal domain (CT) domain (residues 2931-3253) in the absence of immunity protein inhibits cell growth and causes tRNA(UUC-Glu) cleavage; expression of cognate immunity protein CdiI-STECO31 neutralizes growth inhibition leaving tRNA(UUC-Glu) is intact, whereas non-cognate immunity proteins do not confer protection. The CT domain cleaves tRNA; it is most active against tRNA(UUC-Glu), but also has modest activity against tRNA(GUC-Asp), tRNA(UUG-Gln), tRNA(CCC-Gly), tRNA(UCC-Gly), tRNA(GCC-Gly), tRNA(UUU-Lys), tRNA(GGU-Thr) and tRNA(CCA-Trp); tRNA cleavage is inhibited by cognate immunity protein CdiI. Cleavage of tRNA(UUC-Glu) occurs in the anticodon loop between cytosine(37) and 2-methyladenosine(38) (C37-m2A38) and probably also occurs in the anticodon loop of other tRNAs as well. Its function is as follows. The CdiA protein is thought to be exported from the cell through the central lumen of CdiB, the other half of its two-partner system (TPS). The TPS domain probably remains associated with CdiB while the FHA-1 domain forms an extended filament (33 nm long) with the receptor-binding domain (RBD) at its extremity; in the secretion arrested state the C-terminus of the RBD and YP domains form a hairpin-like structure as the FHA-2, PT and CT domains are periplasmic. The YP domain is probably responsible for this arrest at the point where it re-enters the host cell periplasm. Upon binding to a target cell outer membrane receptor (Tsx for this CDI) a signal is transmitted to activate secretion. The filament becomes about 5 nm longer, the rest of CdiA is secreted and the FHA-2 domain becomes stably associated with the target cell's outer membrane where it facilitates entry of the toxic CT domain into the target cell periplasm. From there the toxic CT domain is cleaved and gains access to the target cell cytoplasm via an inner membrane protein (PTS system glucose-specific EIICB component, ptsG for this CDI). The sequence is that of tRNA nuclease CdiA from Escherichia coli (strain STEC_O31).